The sequence spans 272 residues: 3-methyl-2-oxobutanoate hydroxymethyltransferase (272 aa).

Residues Asp52 and Asp91 each contribute to the Mg(2+) site. Residues 52–53 (DS), Asp91, and Lys121 contribute to the 3-methyl-2-oxobutanoate site. Position 123 (Glu123) interacts with Mg(2+). Glu190 acts as the Proton acceptor in catalysis.

This sequence belongs to the PanB family. As to quaternary structure, homodecamer; pentamer of dimers. Mg(2+) serves as cofactor.

It is found in the cytoplasm. It carries out the reaction 3-methyl-2-oxobutanoate + (6R)-5,10-methylene-5,6,7,8-tetrahydrofolate + H2O = 2-dehydropantoate + (6S)-5,6,7,8-tetrahydrofolate. It functions in the pathway cofactor biosynthesis; (R)-pantothenate biosynthesis; (R)-pantoate from 3-methyl-2-oxobutanoate: step 1/2. Catalyzes the reversible reaction in which hydroxymethyl group from 5,10-methylenetetrahydrofolate is transferred onto alpha-ketoisovalerate to form ketopantoate. In Cytophaga hutchinsonii (strain ATCC 33406 / DSM 1761 / CIP 103989 / NBRC 15051 / NCIMB 9469 / D465), this protein is 3-methyl-2-oxobutanoate hydroxymethyltransferase.